The primary structure comprises 754 residues: ToMV susceptible protein tm-1(GCR26) (754 aa).

Residues 1–201 (MATAQSNSPR…AGMVIGRLES (201 aa)) are N-terminal inhibitory domain NN. ATP contacts are provided by residues 18–20 (DTK), T55, R92, and 124–127 (GSGG). The interval 211–431 (KFTVGVTMFG…VDSFLEMSPK (221 aa)) is N-terminal inhibitory domain NC.

Belongs to the UPF0261 family. Homodimer. As to quaternary structure, (Microbial infection) Binds, via an ATP bridge, to the tobamoviruses avirulent (Avr) replication proteins (large and small subunits, e.g. tobacco mild green mosaic virus (TMGMV) AC P18339 and pepper mild mottle virus (PMMoV) AC P89657) to inhibit their function after the translation of tobamoviruses RNA, but before the viral replication complex formation on the membrane surfaces; this interaction is not possible with resistance-breaking strains replication proteins.

Inhibitor of viral RNA replication which confers resistance to some tobamoviruses including tobacco mild green mosaic virus (TMGMV) and pepper mild mottle virus (PMMoV), but not to tomato mosaic virus (ToMV strains L, ToMV0 and ToMV1-2) and tobacco mosaic virus (TMV). Prevents tobamoviruses RNA replication by affecting the association of tobamoviruses replication proteins (large and small subunits) with host membrane-associated proteins (e.g. TOM1, TOM2A and ARL8), thus inhibiting the replication complex formation on the membranes and avoiding viral negative-strand RNA synthesis. In Solanum lycopersicum (Tomato), this protein is ToMV susceptible protein tm-1(GCR26).